We begin with the raw amino-acid sequence, 276 residues long: MQKQIVEEMKVKVSIDPLSEIQRRVDFIKSTLTQSGCKSLILGISGGVDSTTCGRLAQIAVNELNKESNSSDYQFIAVRLPYGIQKDEDEAQLALEFIKPTHSISINIKDGVDGLHKANHLGLAHTGLLPTANDKIDFVKGNVKARARMIAQYEVAGYVGGLVLGTDHSAENITGFYTKFGDGACDLAPLFGLNKRQVRDVAAELGAPEQLVKKVPTADLEELAPQKADEDALSVTYDEIDDFLEGKKIDTEAEARLIKIYQTSQHKRKPIPTIYD.

An ATP-binding site is contributed by 43–50 (GISGGVDS). Residue D49 participates in Mg(2+) binding. R146 provides a ligand contact to deamido-NAD(+). ATP is bound at residue T166. E171 is a binding site for Mg(2+). Positions 179 and 186 each coordinate deamido-NAD(+). ATP-binding residues include K195 and T217. 266–267 (HK) serves as a coordination point for deamido-NAD(+).

It belongs to the NAD synthetase family. As to quaternary structure, homodimer.

The enzyme catalyses deamido-NAD(+) + NH4(+) + ATP = AMP + diphosphate + NAD(+) + H(+). It functions in the pathway cofactor biosynthesis; NAD(+) biosynthesis; NAD(+) from deamido-NAD(+) (ammonia route): step 1/1. In terms of biological role, catalyzes the ATP-dependent amidation of deamido-NAD to form NAD. Uses ammonia as a nitrogen source. The protein is NH(3)-dependent NAD(+) synthetase of Aliivibrio salmonicida (strain LFI1238) (Vibrio salmonicida (strain LFI1238)).